We begin with the raw amino-acid sequence, 143 residues long: Small ribosomal subunit protein uS9 (143 aa).

Residues 123-143 (RPEPKKFGGRGARARFQKSYR) are disordered. Positions 134 to 143 (ARARFQKSYR) are enriched in basic residues.

This sequence belongs to the universal ribosomal protein uS9 family.

The polypeptide is Small ribosomal subunit protein uS9 (RPS16) (Eremothecium gossypii (strain ATCC 10895 / CBS 109.51 / FGSC 9923 / NRRL Y-1056) (Yeast)).